Here is a 478-residue protein sequence, read N- to C-terminus: Odorant receptor coreceptor (478 aa).

The Cytoplasmic segment spans residues 1–43 (MNVQPTKYHGLVLDLMPNIRLMQGFGHFLFRYVNGPVLIRKLY). The chain crosses the membrane as a helical span at residues 44-64 (SWWNLIMILLQYFAIMGNLVM). The Extracellular segment spans residues 65 to 73 (NTGDVNELT). Residues 74-94 (ANTITTLFFTHSVTKFIYVAV) form a helical membrane-spanning segment. Residues 95–133 (NSEHFYRTLGIWNQPNSHSLFAESDARYHSIALAKMRKL) are Cytoplasmic-facing. Residues 134–154 (LVMVMVTTVLSVVAWITITFF) traverse the membrane as a helical segment. Over 155–187 (GDSVKNVFDKETNETYTVEIPRLPIKAWYPWDA) the chain is Extracellular. Residue asparagine 167 is glycosylated (N-linked (GlcNAc...) asparagine). Residues 188 to 208 (MSGVPYFFSFIYQAYFLLFSM) traverse the membrane as a helical segment. At 209–343 (CQANLADVMF…VERHKHVVRL (135 aa)) the chain is on the cytoplasmic side. A helical membrane pass occupies residues 344 to 364 (VSAIGETYGAALLLHMLTSTI). Residues 365–382 (KLTLLAYQATKIDALNVY) lie on the Extracellular side of the membrane. The helical transmembrane segment at 383–403 (GLTVIGYLVYALAQVFLFCIF) threads the bilayer. Over 404–454 (GNRLIEESSSVMEAAYSCHWYDGSEEAKTFVQIVCQQCQKAMTISGAKFFT) the chain is Cytoplasmic. Residues 455 to 475 (VSLDLFASVLGAVVTYFMVLV) form a helical membrane-spanning segment. Over 476–478 (QLK) the chain is Extracellular.

The protein belongs to the insect chemoreceptor superfamily. Heteromeric odorant receptor channel (TC 1.A.69) family. Orco subfamily. Heterodimer with conventional odorant receptors (ORs). Complexes exist early in the endomembrane system in olfactory sensory neurons (OSNs), coupling these complexes to the conserved ciliary trafficking pathway. As to expression, found specifically within most antennal and maxillary palp sensilla, as well as in a subset of proboscis sensilla.

Its subcellular location is the cell membrane. In terms of biological role, odorant coreceptor which complexes with conventional odorant receptors (ORs) to form odorant-sensing units, providing sensitive and prolonged odorant signaling and calcium permeability. Orco is a universal and integral part of the functional odorant receptor, involved in the dendritic localization of other olfactory receptors. Plays a key role in preferred attraction of females for humans over non-human hosts for blood feeding. Human attraction plays a crucial role in the transmission of dengue and yellow fever by the mosquito. Also required for the response to the insect repellent IR3535; or to N,N-Diethyl-meta-toluamide (DEET), the most widely used insect repellent worldwide. The polypeptide is Odorant receptor coreceptor (SGPRor7) (Aedes aegypti (Yellowfever mosquito)).